Consider the following 443-residue polypeptide: Glutamate--tRNA ligase 2 (443 aa).

The short motif at 7-17 (PSPTGYLHVGN) is the 'HIGH' region element. Residues 236-240 (KISKR) carry the 'KMSKS' region motif. Lysine 239 is an ATP binding site.

Belongs to the class-I aminoacyl-tRNA synthetase family. Glutamate--tRNA ligase type 1 subfamily. In terms of assembly, monomer.

It localises to the cytoplasm. It catalyses the reaction tRNA(Glu) + L-glutamate + ATP = L-glutamyl-tRNA(Glu) + AMP + diphosphate. Functionally, catalyzes the attachment of glutamate to tRNA(Glu) in a two-step reaction: glutamate is first activated by ATP to form Glu-AMP and then transferred to the acceptor end of tRNA(Glu). The sequence is that of Glutamate--tRNA ligase 2 from Ehrlichia canis (strain Jake).